Reading from the N-terminus, the 348-residue chain is Phosphate acyltransferase (348 aa).

The protein belongs to the PlsX family. As to quaternary structure, homodimer. Probably interacts with PlsY.

It localises to the cytoplasm. It catalyses the reaction a fatty acyl-[ACP] + phosphate = an acyl phosphate + holo-[ACP]. The protein operates within lipid metabolism; phospholipid metabolism. In terms of biological role, catalyzes the reversible formation of acyl-phosphate (acyl-PO(4)) from acyl-[acyl-carrier-protein] (acyl-ACP). This enzyme utilizes acyl-ACP as fatty acyl donor, but not acyl-CoA. This Pectobacterium carotovorum subsp. carotovorum (strain PC1) protein is Phosphate acyltransferase.